The sequence spans 2192 residues: BEACH domain-containing protein lvsE (2192 aa).

Disordered stretches follow at residues 948–969 (STSL…TSTG), 996–1065 (TTTT…DEPE), 1160–1303 (NESQ…NNLS), and 1343–1363 (DENG…SSSN). Over residues 996–1049 (TTTTTTTTTTTTTTSTTSNTGNDSPLSIESPISSPVLIENTTNTTNTTTTNTTN) the composition is skewed to low complexity. Residues 1171–1187 (NIDNLNPNTGLPYNKST) are compositionally biased toward polar residues. Residues 1188–1231 (NNLSNVNNVNNNNNNNSNNINVSGNNTIGPSSSKSPLRNSRSMS) show a composition bias toward low complexity. The segment covering 1232–1243 (IGSSATKSPSRQ) has biased composition (polar residues). Low complexity-rich tracts occupy residues 1253–1303 (NNNS…NNLS) and 1350–1363 (SSPN…SSSN). The 126-residue stretch at 1366-1491 (IEEEKFIGSW…ESIQIFNKIV (126 aa)) folds into the BEACH-type PH domain. Residues 1504–1795 (DHPSKIIKKS…QLFSKPHPIR (292 aa)) enclose the BEACH domain. Residues 1823 to 1849 (GTINSSFSSTSTSTSTSSPPPSTLNSP) are compositionally biased toward low complexity. The tract at residues 1823-1851 (GTINSSFSSTSTSTSTSSPPPSTLNSPQG) is disordered. WD repeat units follow at residues 1973–2012 (FHHD…IKDS), 2022–2061 (SHDE…YQRS), and 2156–2192 (DSPA…VKDL).

The chain is BEACH domain-containing protein lvsE (lvsE) from Dictyostelium discoideum (Social amoeba).